Reading from the N-terminus, the 210-residue chain is Ribosomal RNA small subunit methyltransferase G (210 aa).

Residues leucine 78, 124-125 (IE), and arginine 138 each bind S-adenosyl-L-methionine.

This sequence belongs to the methyltransferase superfamily. RNA methyltransferase RsmG family.

It is found in the cytoplasm. The catalysed reaction is guanosine(527) in 16S rRNA + S-adenosyl-L-methionine = N(7)-methylguanosine(527) in 16S rRNA + S-adenosyl-L-homocysteine. In terms of biological role, specifically methylates the N7 position of guanine in position 527 of 16S rRNA. This chain is Ribosomal RNA small subunit methyltransferase G, found in Bordetella bronchiseptica (strain ATCC BAA-588 / NCTC 13252 / RB50) (Alcaligenes bronchisepticus).